A 465-amino-acid chain; its full sequence is MTPFLPDRSIAKRFDAAADRYEHHAWAQRHAAEALAERIAALALPAKPRILEIGCGTGLLTRALARRLGPADWTLSDIAPDMLRQARANLNLPARYLRMDGEHPAGLDGQYDLICSSLAVQWFGDLNAGLARLTRWLRPGGHLAIATLAQESFKEWHQAHAVLSLRAATPEYPPVADIRAGLLPGRVDSEQHVQSHHSGLAFLRGLKGIGATAPRAGHQPLNTAQLRAVLRQFDRQGACVTYQFAYGQWRKPRGVFVTGTDTGVGKTLVSALLTRAWQADYWKPLQTGLAEESGDSATVAALARLPPERLHAPAYALQAPLAPWAAASLENTCIDATRLTLPETAAPLVVEGAGGLYVPIDERSLIIDLIDNLGLPVVLAARSGLGTINHTLLSLEALRARKLPVLGVIMSGPPSDDNRRAIEHFGRIPVLAQIPQLDVVDAQAVDLWSKQLPTLDSLLSSNASR.

Residues 1-254 are malonyl-ACP O-methyltransferase; it reads MTPFLPDRSI…AYGQWRKPRG (254 aa). ATP contacts are provided by residues Asp234 and 263–268; that span reads GVGKTL. Residues 255 to 465 form a DTB synthetase region; that stretch reads VFVTGTDTGV…DSLLSSNASR (211 aa). Thr267 serves as a coordination point for Mg(2+). Residue Lys283 is part of the active site. Thr287 is a binding site for substrate. Residues Asp295, 351-354, and 435-437 each bind ATP; these read EGAG and PQL. 2 residues coordinate Mg(2+): Asp295 and Glu351.

The protein in the N-terminal section; belongs to the methyltransferase superfamily. This sequence in the C-terminal section; belongs to the dethiobiotin synthetase family. It depends on Mg(2+) as a cofactor.

The protein localises to the cytoplasm. The catalysed reaction is (7R,8S)-7,8-diammoniononanoate + CO2 + ATP = (4R,5S)-dethiobiotin + ADP + phosphate + 3 H(+). It catalyses the reaction malonyl-[ACP] + S-adenosyl-L-methionine = malonyl-[ACP] methyl ester + S-adenosyl-L-homocysteine. The protein operates within cofactor biosynthesis; biotin biosynthesis; biotin from 7,8-diaminononanoate: step 1/2. Its pathway is cofactor biosynthesis; biotin biosynthesis. Converts the free carboxyl group of a malonyl-thioester to its methyl ester by transfer of a methyl group from S-adenosyl-L-methionine (SAM). It allows synthesis of pimeloyl-ACP via the fatty acid synthetic pathway. Its function is as follows. Catalyzes a mechanistically unusual reaction, the ATP-dependent insertion of CO2 between the N7 and N8 nitrogen atoms of 7,8-diaminopelargonic acid (DAPA, also called 7,8-diammoniononanoate) to form a ureido ring. This Bordetella avium (strain 197N) protein is Biotin biosynthesis bifunctional protein BioCD.